We begin with the raw amino-acid sequence, 305 residues long: Achromobactin-binding periplasmic protein (305 aa).

Positions 1–29 (MNEYLVSRRRLLRLSLSLLPLGLGRPALA) are cleaved as a signal peptide. In terms of domain architecture, Fe/B12 periplasmic-binding spans 37–302 (RVITLFQGAT…DIARVTGIAG (266 aa)).

Belongs to the bacterial solute-binding protein 8 family.

It localises to the periplasm. Its function is as follows. Binds citrate- or chloride-dependent Fe(3+); part of the binding-protein-dependent transport system CbrABCD for uptake of the siderophore achromobactin. This Dickeya dadantii (strain 3937) (Erwinia chrysanthemi (strain 3937)) protein is Achromobactin-binding periplasmic protein (cbrA).